The primary structure comprises 508 residues: Pyruvate kinase (508 aa).

Arg-56 contributes to the substrate binding site. Residues Asn-58, Ser-60, Asp-90, and Thr-91 each contribute to the K(+) site. 58-61 (NFSH) contributes to the ATP binding site. Residues Arg-97 and Lys-185 each coordinate ATP. Glu-251 is a Mg(2+) binding site. Substrate contacts are provided by Gly-274, Asp-275, and Thr-307. Residue Asp-275 coordinates Mg(2+).

The protein belongs to the pyruvate kinase family. Homotetramer. Mg(2+) serves as cofactor. Requires K(+) as cofactor.

The enzyme catalyses pyruvate + ATP = phosphoenolpyruvate + ADP + H(+). It functions in the pathway carbohydrate degradation; glycolysis; pyruvate from D-glyceraldehyde 3-phosphate: step 5/5. Regulated by phosphoenolpyruvate substrate and is allosterically activated by ribose-5-phosphate, AMP and other nucleoside monophosphates but not by fructose-1,6-bisphosphate. The chain is Pyruvate kinase (pyk) from Mycoplasma genitalium (strain ATCC 33530 / DSM 19775 / NCTC 10195 / G37) (Mycoplasmoides genitalium).